The primary structure comprises 945 residues: LPS-assembly protein LptD (945 aa).

The first 33 residues, 1–33 (MALKSPAFRKKFPLLVTGSLLALQPLATSFVVA), serve as a signal peptide directing secretion. The interval 56–98 (AQLPPRPVHDANSVSSSVATAADATGEEASGDKSKLVTEAKGR) is disordered. Over residues 65-79 (DANSVSSSVATAADA) the composition is skewed to low complexity. Basic and acidic residues predominate over residues 85-98 (SGDKSKLVTEAKGR).

This sequence belongs to the LptD family. Component of the lipopolysaccharide transport and assembly complex. Interacts with LptE and LptA.

The protein resides in the cell outer membrane. Together with LptE, is involved in the assembly of lipopolysaccharide (LPS) at the surface of the outer membrane. The chain is LPS-assembly protein LptD from Pseudomonas fluorescens (strain ATCC BAA-477 / NRRL B-23932 / Pf-5).